Here is a 328-residue protein sequence, read N- to C-terminus: Testis-specific serine/threonine-protein kinase 4 (328 aa).

Residues Tyr25 to Val293 form the Protein kinase domain. ATP-binding positions include Ile31 to Val39 and Lys54. Asp148 acts as the Proton acceptor in catalysis. Thr197 is subject to Phosphothreonine.

The protein belongs to the protein kinase superfamily. CAMK Ser/Thr protein kinase family. As to quaternary structure, homodimer. Interacts with HSP90; this interaction stabilizes and activates TSSK4. Interacts with ODF2 (via C-terminus); this interaction promotes ODF2 phosphorylation on 'Ser-95'. May interact with CREM. Interacts with CREB1; this interaction facilitates phosphorylation on 'Ser-133'. Interacts with QRICH2. It depends on Mg(2+) as a cofactor. In terms of processing, activated by autophosphorylation on Thr-197. ODF2 potentiates the autophosphorylation activity of TSSK4 at Thr-197. Post-translationally, ubiquitinated; HSP90 activity negatively regulates ubiquitination and degradation. In terms of tissue distribution, expressed only in the testis.

Its subcellular location is the cytoplasmic vesicle. It is found in the secretory vesicle. It localises to the acrosome. The protein localises to the cell projection. The protein resides in the cilium. Its subcellular location is the flagellum. The catalysed reaction is L-seryl-[protein] + ATP = O-phospho-L-seryl-[protein] + ADP + H(+). It carries out the reaction L-threonyl-[protein] + ATP = O-phospho-L-threonyl-[protein] + ADP + H(+). With respect to regulation, activated by phosphorylation on Thr-197. Its function is as follows. Serine/threonine kinase which is involved in male germ cell development and in mature sperm function. May be involved in the Cre/Creb signaling pathway. Phosphorylates CREB1 on 'Ser-133' in vitro and can stimulate Cre/Creb pathway in cells. Phosphorylates CREM on 'Ser-116' in vitro. Phosphorylates ODF2 on 'Ser-95'. This is Testis-specific serine/threonine-protein kinase 4 from Homo sapiens (Human).